The following is a 401-amino-acid chain: Probable plasmid-partitioning protein ParB (401 aa).

The segment at 232 to 272 (KTRGKENARDKAAAVKEEVKPSKKPKADNGEKTPKGRSHEE) is disordered.

Belongs to the ParB family.

The protein is Probable plasmid-partitioning protein ParB of Xylella fastidiosa (strain 9a5c).